A 215-amino-acid polypeptide reads, in one-letter code: Proapoptotic nucleolar protein 1 (215 aa).

Positions 35–215 (RKGTPTARCL…RLPAPRSAST (181 aa)) are disordered. Over residues 169–180 (PRPPQHLSPPQP) the composition is skewed to pro residues. The segment at 185–215 (MGAAEGSRRADTHHARRRRRARLPAPRSAST) is necessary for nucleolar localization.

Widely expressed.

The protein localises to the nucleus. It localises to the nucleolus. Its function is as follows. Apoptosis-inducing protein that modulates the tumor suppressor function of CDKN2A/p14ARF. Enhances the stability of CDKN2A/p14ARF protein by protecting it from degradation. May act as a tumor suppressor. The chain is Proapoptotic nucleolar protein 1 from Homo sapiens (Human).